The following is a 212-amino-acid chain: 2,3-bisphosphoglycerate-dependent phosphoglycerate mutase (212 aa).

Substrate contacts are provided by residues 9–16, 22–23, R61, 88–91, K99, 115–116, and 159–160; these read RHGQSEWN, TG, ERDY, RR, and GN. Catalysis depends on H10, which acts as the Tele-phosphohistidine intermediate. Residue E88 is the Proton donor/acceptor of the active site.

Belongs to the phosphoglycerate mutase family. BPG-dependent PGAM subfamily. In terms of assembly, homodimer.

It carries out the reaction (2R)-2-phosphoglycerate = (2R)-3-phosphoglycerate. The protein operates within carbohydrate degradation; glycolysis; pyruvate from D-glyceraldehyde 3-phosphate: step 3/5. Catalyzes the interconversion of 2-phosphoglycerate and 3-phosphoglycerate. In Methylobacterium radiotolerans (strain ATCC 27329 / DSM 1819 / JCM 2831 / NBRC 15690 / NCIMB 10815 / 0-1), this protein is 2,3-bisphosphoglycerate-dependent phosphoglycerate mutase.